Consider the following 440-residue polypeptide: Thymidine phosphorylase (440 aa).

This sequence belongs to the thymidine/pyrimidine-nucleoside phosphorylase family. As to quaternary structure, homodimer.

It catalyses the reaction thymidine + phosphate = 2-deoxy-alpha-D-ribose 1-phosphate + thymine. It functions in the pathway pyrimidine metabolism; dTMP biosynthesis via salvage pathway; dTMP from thymine: step 1/2. The enzymes which catalyze the reversible phosphorolysis of pyrimidine nucleosides are involved in the degradation of these compounds and in their utilization as carbon and energy sources, or in the rescue of pyrimidine bases for nucleotide synthesis. This chain is Thymidine phosphorylase, found in Escherichia coli (strain 55989 / EAEC).